The sequence spans 125 residues: Secreted RxLR effector protein 55 (125 aa).

The first 21 residues, 1 to 21 (MAASRSSITTLLLLIVAVALG), serve as a signal peptide directing secretion. Positions 35-38 (RQLR) match the RxLR motif. Over residues 51–87 (ESATSSSSSSALDHKSSAPGEATNASETEHSAASTAS) the composition is skewed to low complexity. A disordered region spans residues 51–96 (ESATSSSSSSALDHKSSAPGEATNASETEHSAASTASEPKHEGPTM). Asparagine 74 is a glycosylation site (N-linked (GlcNAc...) asparagine). The chain crosses the membrane as a helical span at residues 99–119 (FVGPAAAGVLAILLIGAVIAF).

The protein belongs to the RxLR effector family.

It is found in the secreted. Its subcellular location is the host cell membrane. Effector that acts as a broad suppressor of cell death to interrupt plant immunity. Inhibits cell death induced by cell death-inducing proteins, including the PAMP elicitor INF1 from P.infestans. In Plasmopara viticola (Downy mildew of grapevine), this protein is Secreted RxLR effector protein 55.